Reading from the N-terminus, the 905-residue chain is Cadherin-2B (905 aa).

Positions Met-1 to Ala-28 are cleaved as a signal peptide. Residues Phe-29–Arg-160 constitute a propeptide that is removed on maturation. Cadherin domains follow at residues Asp-161 to Phe-268, Leu-269 to Phe-383, Thr-384 to Phe-498, Thr-499 to Pro-604, and Tyr-605 to Pro-713. Topologically, residues Asp-161–Ala-723 are extracellular. Residue Glu-171 participates in Ca(2+) binding. N-linked (GlcNAc...) asparagine glycosylation is present at Asn-191. The Ca(2+) site is built by Asp-227, Glu-229, Asp-260, Met-261, Asn-262, Asp-263, and Asn-264. A glycan (N-linked (GlcNAc...) asparagine) is linked at Asn-274. Residues Asp-294, Asp-296, and Asn-302 each coordinate Ca(2+). An N-linked (GlcNAc...) asparagine glycan is attached at Asn-326. Asp-354 serves as a coordination point for Ca(2+). Residues Asn-403, Asn-573, Asn-623, Asn-651, and Asn-692 are each glycosylated (N-linked (GlcNAc...) asparagine). The chain crosses the membrane as a helical span at residues Ile-724–Met-745. Over Lys-746–Asp-905 the chain is Cytoplasmic. Disordered regions lie at residues Glu-774–Ile-800 and Ser-862–Tyr-883. Positions Glu-775–Tyr-784 are enriched in acidic residues. The segment covering Ser-862 to Gly-879 has biased composition (low complexity).

Homodimer (via extracellular region). Can also form heterodimers with other cadherins (via extracellular region). Dimerization occurs in trans, i.e. with a cadherin chain from another cell.

Its subcellular location is the cell membrane. The protein resides in the sarcolemma. The protein localises to the cell junction. It localises to the cell surface. It is found in the desmosome. Its subcellular location is the adherens junction. In terms of biological role, calcium-dependent cell adhesion protein; preferentially mediates homotypic cell-cell adhesion. Cadherins may thus contribute to the sorting of heterogeneous cell types, and thereby play an important role during embryonic development. Required for proper neurite branching. Required for pre- and postsynaptic organization. The protein is Cadherin-2B (cdh2-b) of Xenopus laevis (African clawed frog).